The sequence spans 239 residues: Ribosomal RNA large subunit methyltransferase E (239 aa).

The interval 1 to 20 is disordered; sequence MTKAPIAGNRTGRKLGQRVK. Basic residues predominate over residues 11-20; sequence TGRKLGQRVK. Positions 81, 83, 104, 120, and 144 each coordinate S-adenosyl-L-methionine. Residue Lys-184 is the Proton acceptor of the active site.

Belongs to the class I-like SAM-binding methyltransferase superfamily. RNA methyltransferase RlmE family.

The protein localises to the cytoplasm. It carries out the reaction uridine(2552) in 23S rRNA + S-adenosyl-L-methionine = 2'-O-methyluridine(2552) in 23S rRNA + S-adenosyl-L-homocysteine + H(+). Specifically methylates the uridine in position 2552 of 23S rRNA at the 2'-O position of the ribose in the fully assembled 50S ribosomal subunit. This is Ribosomal RNA large subunit methyltransferase E from Rhizobium johnstonii (strain DSM 114642 / LMG 32736 / 3841) (Rhizobium leguminosarum bv. viciae).